We begin with the raw amino-acid sequence, 554 residues long: MASSQVGDMVNGNAEPTRHLAKFPPSLWGDRFTSFTLDKQLWDKYGNEIEVLKEQVRSMVVAGGRKAAEQINLINVLERLGVSYHFEKEIEEQLEQLFAKFEDNEDYDLFTIALHFRIFRQHGYKMSCDVFNKFRDSNGEFKETVSNDVQGMLSLYEATYLKIRGEGFLDEAHAFTIAQLESLVGGPHLSSDLSEQVMHALKQSIHRGFPRLEAKHFISFYEKDASRNETLLRLAKLDFNQLQLSHREELCHIFRWWKELDLISKVPYARDRAVECFFWSTCAYYEPQHSVGRAVLTKIMLLLSVTDDTYDAYGTYDELKLYTNAVQRWDVSAMDELPDYMKALYRALLNVYDEVERDLAKQGRDYGVHHSKEAFKEIVRSYEIEAEWFKEGYVASFEEYMKNALVTSTGRLHTTSCFMGLEADVATTEAFEWILTKPKMVAASGAIGRLVDDVMSHDEEQERGHVATGLDCYMKQRGVSKQEAIVELYKMIENAWRDINEEMLKPTAISMKLLIRVLNLSRISDVVYKYVDGYTHPEIIKDHVISLFEDPIPM.

Mg(2+)-binding residues include Asp307 and Asp311. Residues 326-330 (VQRWD) carry the DDXXD motif motif. Positions 452, 456, and 460 each coordinate Mg(2+).

Belongs to the terpene synthase family. Mg(2+) serves as cofactor. In terms of tissue distribution, expressed in flowers.

It catalyses the reaction (2E,6E)-farnesyl diphosphate + H2O = valerianol + diphosphate. It functions in the pathway secondary metabolite biosynthesis; terpenoid biosynthesis. Its function is as follows. Terpene synthase that catalyzes the biosynthesis of the terpene valerianol, which is a volatile compound of floral scent. The chain is Valerianol synthase TPS1A from Camellia hiemalis (Camellia).